The sequence spans 469 residues: Uronate isomerase (469 aa).

This sequence belongs to the metallo-dependent hydrolases superfamily. Uronate isomerase family.

The enzyme catalyses D-glucuronate = D-fructuronate. The catalysed reaction is aldehydo-D-galacturonate = keto-D-tagaturonate. It functions in the pathway carbohydrate metabolism; pentose and glucuronate interconversion. This is Uronate isomerase from Yersinia enterocolitica serotype O:8 / biotype 1B (strain NCTC 13174 / 8081).